The chain runs to 253 residues: 5'-nucleotidase SurE (253 aa).

4 residues coordinate a divalent metal cation: D8, D9, S40, and N92.

It belongs to the SurE nucleotidase family. The cofactor is a divalent metal cation.

It localises to the cytoplasm. The enzyme catalyses a ribonucleoside 5'-phosphate + H2O = a ribonucleoside + phosphate. Nucleotidase that shows phosphatase activity on nucleoside 5'-monophosphates. The sequence is that of 5'-nucleotidase SurE from Hyphomonas neptunium (strain ATCC 15444).